A 367-amino-acid chain; its full sequence is Serine/threonine-protein phosphatase 2A activator 2 (367 aa).

The protein belongs to the PTPA-type PPIase family.

The protein localises to the cytoplasm. The catalysed reaction is [protein]-peptidylproline (omega=180) = [protein]-peptidylproline (omega=0). PPIases accelerate the folding of proteins. It catalyzes the cis-trans isomerization of proline imidic peptide bonds in oligopeptides. Acts as a regulatory subunit for PP2A-like phosphatases modulating their activity or substrate specificity, probably by inducing a conformational change in the catalytic subunit, a direct target of the PPIase. Can reactivate inactive phosphatase PP2A-phosphatase methylesterase complexes (PP2Ai) in presence of ATP and Mg(2+) by dissociating the inactive form from the complex. The sequence is that of Serine/threonine-protein phosphatase 2A activator 2 (RRD2) from Debaryomyces hansenii (strain ATCC 36239 / CBS 767 / BCRC 21394 / JCM 1990 / NBRC 0083 / IGC 2968) (Yeast).